A 214-amino-acid polypeptide reads, in one-letter code: tRNA (guanine-N(7)-)-methyltransferase (214 aa).

Residues E43, E68, D95, and D117 each coordinate S-adenosyl-L-methionine. Residue D117 is part of the active site. Substrate-binding positions include K121, D153, and 190 to 193 (TEYE).

It belongs to the class I-like SAM-binding methyltransferase superfamily. TrmB family.

The catalysed reaction is guanosine(46) in tRNA + S-adenosyl-L-methionine = N(7)-methylguanosine(46) in tRNA + S-adenosyl-L-homocysteine. The protein operates within tRNA modification; N(7)-methylguanine-tRNA biosynthesis. Its function is as follows. Catalyzes the formation of N(7)-methylguanine at position 46 (m7G46) in tRNA. The chain is tRNA (guanine-N(7)-)-methyltransferase from Staphylococcus aureus (strain COL).